The following is a 194-amino-acid chain: uncharacterized protein (194 aa).

The segment at 45 to 138 is disordered; it reads QLLGVPEQHR…AGPPRGDWGV (94 aa). 2 positions are modified to phosphoserine: serine 69 and serine 76. Positions 97–106 are enriched in pro residues; sequence PPLPPPPVLP. Residues 107–116 show a composition bias toward low complexity; it reads GPGEELPGAR. Residues 117 to 128 are compositionally biased toward gly residues; it reads LPGGGGDDGAGR.

This is an uncharacterized protein from Homo sapiens (Human).